A 405-amino-acid polypeptide reads, in one-letter code: Cystathionine gamma-lyase (405 aa).

Substrate-binding residues include Arg62, Tyr114, and Arg119. Lys212 bears the N6-(pyridoxal phosphate)lysine mark. Position 339 (Glu339) interacts with substrate.

This sequence belongs to the trans-sulfuration enzymes family. As to quaternary structure, homotetramer. Interacts with CALM in a calcium-dependent manner. Requires pyridoxal 5'-phosphate as cofactor.

It is found in the cytoplasm. The enzyme catalyses L,L-cystathionine + H2O = 2-oxobutanoate + L-cysteine + NH4(+). It catalyses the reaction L-cysteine + H2O = hydrogen sulfide + pyruvate + NH4(+) + H(+). It carries out the reaction L-homocysteine + H2O = 2-oxobutanoate + hydrogen sulfide + NH4(+) + H(+). The catalysed reaction is L-homoserine = 2-oxobutanoate + NH4(+). The enzyme catalyses L-selenocystathionine + H2O = L-selenocysteine + 2-oxobutanoate + NH4(+). It participates in amino-acid biosynthesis; L-cysteine biosynthesis; L-cysteine from L-homocysteine and L-serine: step 2/2. Its function is as follows. Catalyzes the last step in the trans-sulfuration pathway from L-methionine to L-cysteine in a pyridoxal-5'-phosphate (PLP)-dependent manner, which consists on cleaving the L,L-cystathionine molecule into L-cysteine, ammonia and 2-oxobutanoate. Part of the L-cysteine derived from the trans-sulfuration pathway is utilized for biosynthesis of the ubiquitous antioxidant glutathione. Besides its role in the conversion of L-cystathionine into L-cysteine, it utilizes L-cysteine and L-homocysteine as substrates (at much lower rates than L,L-cystathionine) to produce hydrogen sulfide (H2S). In vitro, it converts two L-cysteine molecules into lanthionine and H2S, and two L-homocysteine molecules to homolanthionine and H2S, which can be particularly relevant under conditions of severe hyperhomocysteinemia. Lanthionine and homolanthionine are structural homologs of L,L-cystathionine that differ by the absence or presence of an extra methylene group, respectively. Acts as a cysteine-protein sulfhydrase by mediating sulfhydration of target proteins: sulfhydration consists of converting -SH groups into -SSH on specific cysteine residues of target proteins such as GAPDH, PTPN1 and NF-kappa-B subunit RELA, thereby regulating their function. By generating the gasotransmitter H2S, it participates in a number of physiological processes such as vasodilation, bone protection, and inflammation. Plays an essential role in myogenesis by contributing to the biogenesis of H2S in skeletal muscle tissue. Can also accept homoserine as substrate. Catalyzes the elimination of selenocystathionine (which can be derived from the diet) to yield selenocysteine, ammonia and 2-oxobutanoate. The sequence is that of Cystathionine gamma-lyase (CTH) from Sus scrofa (Pig).